Consider the following 378-residue polypeptide: Histidine decarboxylase (378 aa).

His-120 contributes to the substrate binding site. Position 233 is an N6-(pyridoxal phosphate)lysine (Lys-233).

Belongs to the group II decarboxylase family. As to quaternary structure, homotetramer. It depends on pyridoxal 5'-phosphate as a cofactor.

It carries out the reaction L-histidine + H(+) = histamine + CO2. In Klebsiella aerogenes (Enterobacter aerogenes), this protein is Histidine decarboxylase (hdc).